The sequence spans 202 residues: MSRYRGPRVRIIRRLGALPGLTNKTPQLKSSPINQSTSNKKISQYRIRLEEKQKLRFHYGITERQLLNYVRIARHAKGSTGEILLQLLEMRLDNIIFRLGMAPTIPGARQLVNHRHILVNEHIVDIPSYRCKPQDFITIKDRQKSQAIISKNIEFYQKYKIPNHLIYNSLKKQGLVNQILDRESIGLKINELLVVEYYSRQA.

One can recognise an S4 RNA-binding domain in the interval 90-153 (MRLDNIIFRL…KSQAIISKNI (64 aa)).

The protein belongs to the universal ribosomal protein uS4 family. Part of the 30S ribosomal subunit. Contacts protein S5. The interaction surface between S4 and S5 is involved in control of translational fidelity.

It is found in the plastid. It localises to the chloroplast. Functionally, one of the primary rRNA binding proteins, it binds directly to 16S rRNA where it nucleates assembly of the body of the 30S subunit. With S5 and S12 plays an important role in translational accuracy. In Splachnum sphaericum (Pinkstink dung moss), this protein is Small ribosomal subunit protein uS4c (rps4).